Here is a 431-residue protein sequence, read N- to C-terminus: UDP-N-acetylglucosamine 1-carboxyvinyltransferase (431 aa).

Lysine 25–asparagine 26 provides a ligand contact to phosphoenolpyruvate. UDP-N-acetyl-alpha-D-glucosamine is bound at residue arginine 101. Cysteine 125 serves as the catalytic Proton donor. Position 125 is a 2-(S-cysteinyl)pyruvic acid O-phosphothioketal (cysteine 125). Residues aspartate 317 and isoleucine 339 each coordinate UDP-N-acetyl-alpha-D-glucosamine.

This sequence belongs to the EPSP synthase family. MurA subfamily.

It localises to the cytoplasm. It carries out the reaction phosphoenolpyruvate + UDP-N-acetyl-alpha-D-glucosamine = UDP-N-acetyl-3-O-(1-carboxyvinyl)-alpha-D-glucosamine + phosphate. The protein operates within cell wall biogenesis; peptidoglycan biosynthesis. In terms of biological role, cell wall formation. Adds enolpyruvyl to UDP-N-acetylglucosamine. The sequence is that of UDP-N-acetylglucosamine 1-carboxyvinyltransferase from Thermobifida fusca (strain YX).